We begin with the raw amino-acid sequence, 596 residues long: Aspartate--tRNA(Asp/Asn) ligase (596 aa).

Glu-175 contributes to the L-aspartate binding site. Positions 199–202 are aspartate; the sequence is QQYK. L-aspartate contacts are provided by Arg-221 and His-454. 221-223 is an ATP binding site; sequence RDE. Glu-488 is a binding site for ATP. Position 495 (Arg-495) interacts with L-aspartate. Residue 540–543 participates in ATP binding; it reads GIDR.

It belongs to the class-II aminoacyl-tRNA synthetase family. Type 1 subfamily. As to quaternary structure, homodimer.

It is found in the cytoplasm. The catalysed reaction is tRNA(Asx) + L-aspartate + ATP = L-aspartyl-tRNA(Asx) + AMP + diphosphate. Functionally, aspartyl-tRNA synthetase with relaxed tRNA specificity since it is able to aspartylate not only its cognate tRNA(Asp) but also tRNA(Asn). Reaction proceeds in two steps: L-aspartate is first activated by ATP to form Asp-AMP and then transferred to the acceptor end of tRNA(Asp/Asn). The protein is Aspartate--tRNA(Asp/Asn) ligase of Rhizobium rhizogenes (strain K84 / ATCC BAA-868) (Agrobacterium radiobacter).